Reading from the N-terminus, the 1024-residue chain is Multidrug resistance protein MdtC (1024 aa).

The next 12 membrane-spanning stretches (helical) occupy residues 12 to 32 (VATT…FSLL), 333 to 353 (EVER…FIFL), 360 to 380 (LIPA…MYLC), 387 to 407 (LSLM…IVVL), 435 to 455 (VLSM…MAGL), 469 to 489 (VAIG…CAWL), 528 to 548 (WVMV…ISIP), 853 to 873 (LWLI…LYES), 875 to 895 (VHPL…LLAL), 897 to 917 (LFDA…IGIV), 953 to 973 (PIIM…LSSG), and 984 to 1004 (ITIV…TPVI).

Belongs to the resistance-nodulation-cell division (RND) (TC 2.A.6) family. MdtC subfamily. As to quaternary structure, part of a tripartite efflux system composed of MdtA, MdtB and MdtC. MdtC forms a heteromultimer with MdtB.

The protein localises to the cell inner membrane. In Yersinia pseudotuberculosis serotype IB (strain PB1/+), this protein is Multidrug resistance protein MdtC.